We begin with the raw amino-acid sequence, 307 residues long: Acetyl-coenzyme A carboxylase carboxyl transferase subunit beta (307 aa).

Residues L28–P297 enclose the CoA carboxyltransferase N-terminal domain. The segment at R286–A307 is disordered. The span at G292 to A307 shows a compositional bias: pro residues.

The protein belongs to the AccD/PCCB family. Acetyl-CoA carboxylase is a heterohexamer composed of biotin carboxyl carrier protein (AccB), biotin carboxylase (AccC) and two subunits each of ACCase subunit alpha (AccA) and ACCase subunit beta (AccD).

Its subcellular location is the cytoplasm. It catalyses the reaction N(6)-carboxybiotinyl-L-lysyl-[protein] + acetyl-CoA = N(6)-biotinyl-L-lysyl-[protein] + malonyl-CoA. The protein operates within lipid metabolism; malonyl-CoA biosynthesis; malonyl-CoA from acetyl-CoA: step 1/1. Component of the acetyl coenzyme A carboxylase (ACC) complex. Biotin carboxylase (BC) catalyzes the carboxylation of biotin on its carrier protein (BCCP) and then the CO(2) group is transferred by the transcarboxylase to acetyl-CoA to form malonyl-CoA. The sequence is that of Acetyl-coenzyme A carboxylase carboxyl transferase subunit beta from Methylorubrum extorquens (strain ATCC 14718 / DSM 1338 / JCM 2805 / NCIMB 9133 / AM1) (Methylobacterium extorquens).